A 159-amino-acid chain; its full sequence is RNA pyrophosphohydrolase (159 aa).

The Nudix hydrolase domain occupies Gly-6–Lys-149. The short motif at Gly-38 to Gly-59 is the Nudix box element.

The protein belongs to the Nudix hydrolase family. RppH subfamily. A divalent metal cation is required as a cofactor.

Its function is as follows. Accelerates the degradation of transcripts by removing pyrophosphate from the 5'-end of triphosphorylated RNA, leading to a more labile monophosphorylated state that can stimulate subsequent ribonuclease cleavage. The chain is RNA pyrophosphohydrolase from Pseudomonas aeruginosa (strain LESB58).